Reading from the N-terminus, the 314-residue chain is tRNA(Ile)-lysidine synthase (314 aa).

Residue 37–42 participates in ATP binding; sequence SGGPDS.

This sequence belongs to the tRNA(Ile)-lysidine synthase family.

Its subcellular location is the cytoplasm. It catalyses the reaction cytidine(34) in tRNA(Ile2) + L-lysine + ATP = lysidine(34) in tRNA(Ile2) + AMP + diphosphate + H(+). In terms of biological role, ligates lysine onto the cytidine present at position 34 of the AUA codon-specific tRNA(Ile) that contains the anticodon CAU, in an ATP-dependent manner. Cytidine is converted to lysidine, thus changing the amino acid specificity of the tRNA from methionine to isoleucine. This chain is tRNA(Ile)-lysidine synthase, found in Corynebacterium glutamicum (strain ATCC 13032 / DSM 20300 / JCM 1318 / BCRC 11384 / CCUG 27702 / LMG 3730 / NBRC 12168 / NCIMB 10025 / NRRL B-2784 / 534).